A 632-amino-acid chain; its full sequence is Probable potassium transport system protein Kup 1 (632 aa).

A run of 12 helical transmembrane segments spans residues 17-37, 60-80, 106-126, 146-166, 175-195, 210-230, 254-274, 292-312, 344-364, 370-390, 401-421, and 426-446; these read LFYL…TSPL, LISL…VLFL, TAIL…DAMI, LADY…VVQS, FFGP…ISHI, AVAF…AVFL, WFLL…ALVL, ALLP…QAVI, IFVP…VLGF, LATA…IMAF, LPVA…FLGA, and IHDG…VMWT.

It belongs to the HAK/KUP transporter (TC 2.A.72) family.

The protein resides in the cell inner membrane. The enzyme catalyses K(+)(in) + H(+)(in) = K(+)(out) + H(+)(out). Its function is as follows. Transport of potassium into the cell. Likely operates as a K(+):H(+) symporter. The protein is Probable potassium transport system protein Kup 1 of Rhizobium johnstonii (strain DSM 114642 / LMG 32736 / 3841) (Rhizobium leguminosarum bv. viciae).